A 148-amino-acid chain; its full sequence is Extracellular globin-2B (148 aa).

The 146-residue stretch at 3-148 (CCSAADRHEV…IADVIKAELP (146 aa)) folds into the Globin domain. Cysteine 4 and cysteine 135 form a disulfide bridge. Heme b is bound at residue histidine 98.

The protein belongs to the globin family. In terms of assembly, disulfide bonded trimer of chains IIA, IIB, and IIC.

It localises to the secreted. The chain is Extracellular globin-2B from Tylorrhynchus heterochetus (Japanese palolo worm).